A 902-amino-acid chain; its full sequence is Glutamate receptor 4 (902 aa).

Residues 1 to 20 form the signal peptide; the sequence is MRIISRQIVLLFSGFWGLAM. At 22 to 544 the chain is on the extracellular side; that stretch reads AFPSSVQIGG…GVFSFLDPLA (523 aa). Residues Asn52, Asn56, Asn258, Asn371, Asn407, and Asn414 are each glycosylated (N-linked (GlcNAc...) asparagine). A disulfide bridge links Cys84 with Cys331. L-glutamate-binding residues include Pro500, Thr502, and Arg507. Residues 545-565 traverse the membrane as a helical segment; the sequence is YEIWMCIVFAYIGVSVVLFLV. Topologically, residues 566–592 are cytoplasmic; that stretch reads SRFSPYEWHTEEPEDGKEGPSDQPPNE. The segment at residues 593-608 is an intramembrane region (helical; Pore-forming); the sequence is FGIFNSLWFSLGAFMQ. Residues 609–611 lie within the membrane without spanning it; that stretch reads QGC. Cys611 is lipidated: S-palmitoyl cysteine. Residues 612-617 lie on the Cytoplasmic side of the membrane; sequence DISPRS. Residues 618 to 638 traverse the membrane as a helical segment; sequence LSGRIVGGVWWFFTLIIISSY. At 639 to 813 the chain is on the extracellular side; it reads TANLAAFLTV…DKTSALSLSN (175 aa). 3 residues coordinate L-glutamate: Ser676, Thr677, and Glu727. A disulfide bond links Cys740 and Cys795. The helical transmembrane segment at 814-834 threads the bilayer; it reads VAGVFYILVGGLGLAMLVALI. At 835-902 the chain is on the cytoplasmic side; that stretch reads EFCYKSRAEA…GLAVIASDLP (68 aa). Cys837 is lipidated: S-palmitoyl cysteine. The residue at position 862 (Ser862) is a Phosphoserine; by PKC/PRKCG.

The protein belongs to the glutamate-gated ion channel (TC 1.A.10.1) family. GRIA4 subfamily. In terms of assembly, homotetramer or heterotetramer of pore-forming glutamate receptor subunits. Tetramers may be formed by the dimerization of dimers. Interacts with EPB41L1 via its C-terminus. Isoform 3 interacts with PICK1. Found in a complex with GRIA1, GRIA2, GRIA3, CNIH2, CNIH3, CACNG2, CACNG3, CACNG4, CACNG5, CACNG7 and CACNG8. Interacts with CACNG5 and PRKCG. Found in a complex with GRIA1, GRIA2, GRIA3, DLG4, CACNG8 and CNIH2. In terms of processing, palmitoylated. Depalmitoylated upon L-glutamate stimulation. ZDHHC3/GODZ specifically palmitoylates Cys-611, which leads to Golgi retention and decreased cell surface expression. In contrast, Cys-837 palmitoylation does not affect cell surface expression but regulates stimulation-dependent endocytosis. Phosphorylated at Ser-862 by PRKCG; phosphorylation increases plasma membrane-associated GRI4 expression.

It is found in the cell membrane. The protein resides in the postsynaptic cell membrane. It localises to the cell projection. Its subcellular location is the dendrite. The catalysed reaction is Ca(2+)(in) = Ca(2+)(out). It carries out the reaction Na(+)(in) = Na(+)(out). It catalyses the reaction Mg(2+)(in) = Mg(2+)(out). Its function is as follows. Ionotropic glutamate receptor that functions as a ligand-gated cation channel, gated by L-glutamate and glutamatergic agonists such as alpha-amino-3-hydroxy-5-methyl-4-isoxazolepropionic acid (AMPA), quisqualic acid, and kainic acid. L-glutamate acts as an excitatory neurotransmitter at many synapses in the central nervous system and plays an important role in fast excitatory synaptic transmission. Binding of the excitatory neurotransmitter L-glutamate induces a conformation change, leading to the opening of the cation channel, and thereby converts the chemical signal to an electrical impulse upon entry of monovalent and divalent cations such as sodium and calcium. The receptor then desensitizes rapidly and enters a transient inactive state, characterized by the presence of bound agonist. In the presence of CACNG8, shows resensitization which is characterized by a delayed accumulation of current flux upon continued application of L-glutamate. This is Glutamate receptor 4 from Macaca fascicularis (Crab-eating macaque).